The following is a 509-amino-acid chain: UDP-N-acetylmuramoyl-L-alanyl-D-glutamate--2,6-diaminopimelate ligase (509 aa).

Serine 32 provides a ligand contact to UDP-N-acetyl-alpha-D-muramoyl-L-alanyl-D-glutamate. ATP is bound at residue 117–123; that stretch reads GTNGKTT. Residues 159 to 160, serine 186, glutamine 192, and arginine 194 contribute to the UDP-N-acetyl-alpha-D-muramoyl-L-alanyl-D-glutamate site; that span reads TT. Lysine 226 carries the N6-carboxylysine modification. Residues arginine 401, 425-428, glycine 476, and glutamate 480 contribute to the meso-2,6-diaminopimelate site; that span reads DNPR. The Meso-diaminopimelate recognition motif signature appears at 425 to 428; it reads DNPR.

Belongs to the MurCDEF family. MurE subfamily. The cofactor is Mg(2+). In terms of processing, carboxylation is probably crucial for Mg(2+) binding and, consequently, for the gamma-phosphate positioning of ATP.

It localises to the cytoplasm. It carries out the reaction UDP-N-acetyl-alpha-D-muramoyl-L-alanyl-D-glutamate + meso-2,6-diaminopimelate + ATP = UDP-N-acetyl-alpha-D-muramoyl-L-alanyl-gamma-D-glutamyl-meso-2,6-diaminopimelate + ADP + phosphate + H(+). Its pathway is cell wall biogenesis; peptidoglycan biosynthesis. In terms of biological role, catalyzes the addition of meso-diaminopimelic acid to the nucleotide precursor UDP-N-acetylmuramoyl-L-alanyl-D-glutamate (UMAG) in the biosynthesis of bacterial cell-wall peptidoglycan. This chain is UDP-N-acetylmuramoyl-L-alanyl-D-glutamate--2,6-diaminopimelate ligase, found in Prochlorococcus marinus (strain NATL1A).